Reading from the N-terminus, the 261-residue chain is Carnitinyl-CoA dehydratase (261 aa).

Glu111 acts as the Nucleophile in catalysis. Catalysis depends on Glu131, which acts as the Proton acceptor.

It belongs to the enoyl-CoA hydratase/isomerase family.

The catalysed reaction is (R)-carnitinyl-CoA = crotonobetainyl-CoA + H2O. The protein operates within amine and polyamine metabolism; carnitine metabolism. In terms of biological role, catalyzes the reversible dehydration of L-carnitinyl-CoA to crotonobetainyl-CoA. The polypeptide is Carnitinyl-CoA dehydratase (Salmonella paratyphi C (strain RKS4594)).